We begin with the raw amino-acid sequence, 81 residues long: Small ribosomal subunit protein bS16 (81 aa).

Belongs to the bacterial ribosomal protein bS16 family.

This chain is Small ribosomal subunit protein bS16, found in Lachnoclostridium phytofermentans (strain ATCC 700394 / DSM 18823 / ISDg) (Clostridium phytofermentans).